The following is a 107-amino-acid chain: Nucleoid-associated protein CE0210 (107 aa).

It belongs to the YbaB/EbfC family. In terms of assembly, homodimer.

The protein resides in the cytoplasm. It is found in the nucleoid. Functionally, binds to DNA and alters its conformation. May be involved in regulation of gene expression, nucleoid organization and DNA protection. This Corynebacterium efficiens (strain DSM 44549 / YS-314 / AJ 12310 / JCM 11189 / NBRC 100395) protein is Nucleoid-associated protein CE0210.